A 197-amino-acid polypeptide reads, in one-letter code: Female-specific protein transformer (197 aa).

Basic and acidic residues-rich tracts occupy residues 1–17 (MKMDADSSGTQHRDSRG) and 24–39 (REREYHGRSSERDSRK). Disordered regions lie at residues 1 to 136 (MKMD…PKII) and 158 to 197 (GYQRLPRPPPFPPAPYRYRQRPPFIGVPRFGYRNAGRPPY). 2 stretches are compositionally biased toward basic residues: residues 58–75 (RRLRQRAHQSTRRTRSRS) and 84–127 (SRHR…RSPH). Over residues 163 to 172 (PRPPPFPPAP) the composition is skewed to pro residues.

The protein localises to the nucleus speckle. Functionally, member of the regulatory pathway controlling female somatic sexual differentiation, regulated by Sxl. Activates dsx female-specific splicing by promoting the formation of a splicing enhancer complex which consists of tra, tra2 and sr proteins. Together with tra-2, plays a role in switching fru splicing from the male-specific pattern to the female-specific pattern through activation of the female-specific fru 5'-splice site. No known function in males. This Drosophila melanogaster (Fruit fly) protein is Female-specific protein transformer (tra).